Reading from the N-terminus, the 307-residue chain is Bifunctional protein FolD 3 (307 aa).

NADP(+) is bound by residues 169–171, Ser-194, and Ile-235; that span reads GRS.

Belongs to the tetrahydrofolate dehydrogenase/cyclohydrolase family. As to quaternary structure, homodimer.

The catalysed reaction is (6R)-5,10-methylene-5,6,7,8-tetrahydrofolate + NADP(+) = (6R)-5,10-methenyltetrahydrofolate + NADPH. It carries out the reaction (6R)-5,10-methenyltetrahydrofolate + H2O = (6R)-10-formyltetrahydrofolate + H(+). It participates in one-carbon metabolism; tetrahydrofolate interconversion. Its function is as follows. Catalyzes the oxidation of 5,10-methylenetetrahydrofolate to 5,10-methenyltetrahydrofolate and then the hydrolysis of 5,10-methenyltetrahydrofolate to 10-formyltetrahydrofolate. This is Bifunctional protein FolD 3 from Ectopseudomonas mendocina (strain ymp) (Pseudomonas mendocina).